A 355-amino-acid chain; its full sequence is Protein RecA (355 aa).

Residue 67–74 (GPESSGKT) participates in ATP binding. The interval 336 to 355 (NSAASDYEDNENEEMNNEEF) is disordered. Positions 341-355 (DYEDNENEEMNNEEF) are enriched in acidic residues.

The protein belongs to the RecA family.

It localises to the cytoplasm. In terms of biological role, can catalyze the hydrolysis of ATP in the presence of single-stranded DNA, the ATP-dependent uptake of single-stranded DNA by duplex DNA, and the ATP-dependent hybridization of homologous single-stranded DNAs. It interacts with LexA causing its activation and leading to its autocatalytic cleavage. The protein is Protein RecA of Photorhabdus laumondii subsp. laumondii (strain DSM 15139 / CIP 105565 / TT01) (Photorhabdus luminescens subsp. laumondii).